The chain runs to 320 residues: Methionyl-tRNA formyltransferase (320 aa).

112–115 (SLLP) is a (6S)-5,6,7,8-tetrahydrofolate binding site.

The protein belongs to the Fmt family.

The enzyme catalyses L-methionyl-tRNA(fMet) + (6R)-10-formyltetrahydrofolate = N-formyl-L-methionyl-tRNA(fMet) + (6S)-5,6,7,8-tetrahydrofolate + H(+). In terms of biological role, attaches a formyl group to the free amino group of methionyl-tRNA(fMet). The formyl group appears to play a dual role in the initiator identity of N-formylmethionyl-tRNA by promoting its recognition by IF2 and preventing the misappropriation of this tRNA by the elongation apparatus. This Allorhizobium ampelinum (strain ATCC BAA-846 / DSM 112012 / S4) (Agrobacterium vitis (strain S4)) protein is Methionyl-tRNA formyltransferase.